A 199-amino-acid polypeptide reads, in one-letter code: NAD(P)H dehydrogenase (quinone) (199 aa).

The Flavodoxin-like domain maps to 4–190 (ILVLYYSMYG…KIARYQGEHV (187 aa)). Residues 10-15 (SMYGHI) and 79-81 (TRF) each bind FMN. Tyr-12 contacts NAD(+). Trp-99 provides a ligand contact to substrate. Position 134 (His-134) interacts with FMN.

The protein belongs to the WrbA family. FMN serves as cofactor.

The enzyme catalyses a quinone + NADH + H(+) = a quinol + NAD(+). It catalyses the reaction a quinone + NADPH + H(+) = a quinol + NADP(+). The chain is NAD(P)H dehydrogenase (quinone) from Photorhabdus laumondii subsp. laumondii (strain DSM 15139 / CIP 105565 / TT01) (Photorhabdus luminescens subsp. laumondii).